The primary structure comprises 80 residues: Exodeoxyribonuclease 7 small subunit (80 aa).

The protein belongs to the XseB family. Heterooligomer composed of large and small subunits.

It localises to the cytoplasm. It catalyses the reaction Exonucleolytic cleavage in either 5'- to 3'- or 3'- to 5'-direction to yield nucleoside 5'-phosphates.. In terms of biological role, bidirectionally degrades single-stranded DNA into large acid-insoluble oligonucleotides, which are then degraded further into small acid-soluble oligonucleotides. The polypeptide is Exodeoxyribonuclease 7 small subunit (Rickettsia canadensis (strain McKiel)).